The sequence spans 188 residues: Mitochondrial import inner membrane translocase subunit Tim23B (188 aa).

2 helical membrane-spanning segments follow: residues 73–93 and 125–145; these read FELA…FGAM and ALWA…GVII.

Belongs to the Tim17/Tim22/Tim23 family.

The protein resides in the mitochondrion inner membrane. May participate in the translocation of transit peptide-containing proteins across the mitochondrial inner membrane. the PAM complex. This is Mitochondrial import inner membrane translocase subunit Tim23B from Homo sapiens (Human).